Consider the following 257-residue polypeptide: Acyl-[acyl-carrier-protein]--UDP-N-acetylglucosamine O-acyltransferase (257 aa).

The protein belongs to the transferase hexapeptide repeat family. LpxA subfamily. As to quaternary structure, homotrimer.

The protein resides in the cytoplasm. It catalyses the reaction a (3R)-hydroxyacyl-[ACP] + UDP-N-acetyl-alpha-D-glucosamine = a UDP-3-O-[(3R)-3-hydroxyacyl]-N-acetyl-alpha-D-glucosamine + holo-[ACP]. Its pathway is glycolipid biosynthesis; lipid IV(A) biosynthesis; lipid IV(A) from (3R)-3-hydroxytetradecanoyl-[acyl-carrier-protein] and UDP-N-acetyl-alpha-D-glucosamine: step 1/6. Involved in the biosynthesis of lipid A, a phosphorylated glycolipid that anchors the lipopolysaccharide to the outer membrane of the cell. The polypeptide is Acyl-[acyl-carrier-protein]--UDP-N-acetylglucosamine O-acyltransferase (Fusobacterium nucleatum subsp. nucleatum (strain ATCC 25586 / DSM 15643 / BCRC 10681 / CIP 101130 / JCM 8532 / KCTC 2640 / LMG 13131 / VPI 4355)).